A 173-amino-acid chain; its full sequence is Mesencephalic astrocyte-derived neurotrophic factor homolog (173 aa).

An N-terminal signal peptide occupies residues 1 to 22 (MKTWHMVVVIGFLATLAQTSLA). Cystine bridges form between C28/C114, C31/C103, C61/C72, and C148/C151.

Belongs to the ARMET family.

The protein localises to the secreted. In terms of biological role, required during the maturation of the embryonic nervous system for maintenance of neuronal and cuticular connectivity. Essential for maintenance of dopaminergic neurons and dopamine levels. The protein is Mesencephalic astrocyte-derived neurotrophic factor homolog of Drosophila sechellia (Fruit fly).